A 405-amino-acid polypeptide reads, in one-letter code: Phosphopentomutase (405 aa).

6 residues coordinate Mn(2+): Asp-10, Asp-305, His-310, Asp-346, His-347, and His-358.

It belongs to the phosphopentomutase family. The cofactor is Mn(2+).

The protein localises to the cytoplasm. The enzyme catalyses 2-deoxy-alpha-D-ribose 1-phosphate = 2-deoxy-D-ribose 5-phosphate. It catalyses the reaction alpha-D-ribose 1-phosphate = D-ribose 5-phosphate. It functions in the pathway carbohydrate degradation; 2-deoxy-D-ribose 1-phosphate degradation; D-glyceraldehyde 3-phosphate and acetaldehyde from 2-deoxy-alpha-D-ribose 1-phosphate: step 1/2. Its function is as follows. Isomerase that catalyzes the conversion of deoxy-ribose 1-phosphate (dRib-1-P) and ribose 1-phosphate (Rib-1-P) to deoxy-ribose 5-phosphate (dRib-5-P) and ribose 5-phosphate (Rib-5-P), respectively. In Methylorubrum extorquens (strain CM4 / NCIMB 13688) (Methylobacterium extorquens), this protein is Phosphopentomutase.